Consider the following 426-residue polypeptide: Probable inactive metalloprotease YmfF (426 aa).

Histidine 50 and glutamate 138 together coordinate Zn(2+).

It belongs to the peptidase M16 family.

The polypeptide is Probable inactive metalloprotease YmfF (ymfF) (Bacillus subtilis (strain 168)).